A 72-amino-acid polypeptide reads, in one-letter code: UPF0337 protein bsl2407 (72 aa).

Residues Met1–Ala55 are disordered. Residues Glu35 to Gln47 show a composition bias toward low complexity.

This sequence belongs to the UPF0337 (CsbD) family.

In Bradyrhizobium diazoefficiens (strain JCM 10833 / BCRC 13528 / IAM 13628 / NBRC 14792 / USDA 110), this protein is UPF0337 protein bsl2407.